A 125-amino-acid polypeptide reads, in one-letter code: Small ribosomal subunit protein uS12 (125 aa).

Asp89 bears the 3-methylthioaspartic acid mark. Residues Ser101–Ala125 are disordered. The segment covering Ser113 to Ala125 has biased composition (basic residues).

It belongs to the universal ribosomal protein uS12 family. Part of the 30S ribosomal subunit. Contacts proteins S8 and S17. May interact with IF1 in the 30S initiation complex.

Functionally, with S4 and S5 plays an important role in translational accuracy. In terms of biological role, interacts with and stabilizes bases of the 16S rRNA that are involved in tRNA selection in the A site and with the mRNA backbone. Located at the interface of the 30S and 50S subunits, it traverses the body of the 30S subunit contacting proteins on the other side and probably holding the rRNA structure together. The combined cluster of proteins S8, S12 and S17 appears to hold together the shoulder and platform of the 30S subunit. In Thiobacillus denitrificans (strain ATCC 25259 / T1), this protein is Small ribosomal subunit protein uS12.